The primary structure comprises 670 residues: Probable plastid-lipid-associated protein 14, chloroplastic (670 aa).

A chloroplast-targeting transit peptide spans 1–52 (MALCGVCSTPNLPNLQVFRSVRNSSIGYKRNHSLWQLRSSSFRAKSVIFHCS). In terms of domain architecture, Protein kinase spans 88-399 (FRILDRVSIG…CLDALKHPFL (312 aa)).

It belongs to the PAP/fibrillin family. In terms of processing, not autophosphorylated. As to expression, expressed in roots.

Its subcellular location is the plastid. The protein localises to the chloroplast. Directly regulated by DOF3.6/OBP3; unknown function. In Arabidopsis thaliana (Mouse-ear cress), this protein is Probable plastid-lipid-associated protein 14, chloroplastic (PAP14).